The following is a 153-amino-acid chain: Aspartate carbamoyltransferase regulatory chain (153 aa).

Cysteine 109, cysteine 114, cysteine 138, and cysteine 141 together coordinate Zn(2+).

It belongs to the PyrI family. Contains catalytic and regulatory chains. The cofactor is Zn(2+).

Involved in allosteric regulation of aspartate carbamoyltransferase. The sequence is that of Aspartate carbamoyltransferase regulatory chain from Edwardsiella ictaluri (strain 93-146).